The primary structure comprises 157 residues: 6,7-dimethyl-8-ribityllumazine synthase 2 (157 aa).

5-amino-6-(D-ribitylamino)uracil is bound by residues W21, 55–57 (AYE), and 79–81 (FVV). R87 functions as the Proton donor in the catalytic mechanism. S112 is a 5-amino-6-(D-ribitylamino)uracil binding site. H126 is a (2S)-2-hydroxy-3-oxobutyl phosphate binding site.

The protein belongs to the DMRL synthase family. In terms of assembly, homodecamer, arranged as a dimer of pentamers.

The catalysed reaction is (2S)-2-hydroxy-3-oxobutyl phosphate + 5-amino-6-(D-ribitylamino)uracil = 6,7-dimethyl-8-(1-D-ribityl)lumazine + phosphate + 2 H2O + H(+). Its pathway is cofactor biosynthesis; riboflavin biosynthesis; riboflavin from 2-hydroxy-3-oxobutyl phosphate and 5-amino-6-(D-ribitylamino)uracil: step 1/2. Functionally, catalyzes the formation of 6,7-dimethyl-8-ribityllumazine by condensation of 5-amino-6-(D-ribitylamino)uracil with 3,4-dihydroxy-2-butanone 4-phosphate. This is the penultimate step in the biosynthesis of riboflavin. The polypeptide is 6,7-dimethyl-8-ribityllumazine synthase 2 (ribH2) (Mesorhizobium japonicum (strain LMG 29417 / CECT 9101 / MAFF 303099) (Mesorhizobium loti (strain MAFF 303099))).